The sequence spans 301 residues: UDP-N-acetylenolpyruvoylglucosamine reductase 1 (301 aa).

An FAD-binding PCMH-type domain is found at 29-196 (KIGGPADILI…LEAEFQLQIG (168 aa)). Arg174 is a catalytic residue. The active-site Proton donor is Ser225. The active site involves Glu295.

Belongs to the MurB family. Requires FAD as cofactor.

The protein resides in the cytoplasm. The catalysed reaction is UDP-N-acetyl-alpha-D-muramate + NADP(+) = UDP-N-acetyl-3-O-(1-carboxyvinyl)-alpha-D-glucosamine + NADPH + H(+). Its pathway is cell wall biogenesis; peptidoglycan biosynthesis. In terms of biological role, cell wall formation. The chain is UDP-N-acetylenolpyruvoylglucosamine reductase 1 (murB1) from Bacillus anthracis.